Consider the following 59-residue polypeptide: MSQHLVPEAKNGLSKFKNEVAAEMGVPFSDYNGDLSSKQCGSVGGEMVKRMVEQYEKGI.

It belongs to the alpha/beta-type SASP family. In terms of processing, SASP are degraded in the first minutes of spore germination and provide amino acids for both new protein synthesis and metabolism.

In terms of biological role, SASP are bound to spore DNA. They are double-stranded DNA-binding proteins that cause DNA to change to an a-like conformation. They protect the DNA backbone from chemical and enzymatic cleavage and are thus involved in dormant spore's high resistance to UV light. The protein is Small, acid-soluble spore protein C1 (sspC1) of Clostridium perfringens (strain 13 / Type A).